Here is an 878-residue protein sequence, read N- to C-terminus: Alanine--tRNA ligase (878 aa).

Zn(2+) is bound by residues H568, H572, C669, and H673.

The protein belongs to the class-II aminoacyl-tRNA synthetase family. Zn(2+) serves as cofactor.

Its subcellular location is the cytoplasm. The catalysed reaction is tRNA(Ala) + L-alanine + ATP = L-alanyl-tRNA(Ala) + AMP + diphosphate. Catalyzes the attachment of alanine to tRNA(Ala) in a two-step reaction: alanine is first activated by ATP to form Ala-AMP and then transferred to the acceptor end of tRNA(Ala). Also edits incorrectly charged Ser-tRNA(Ala) and Gly-tRNA(Ala) via its editing domain. The chain is Alanine--tRNA ligase from Polaromonas sp. (strain JS666 / ATCC BAA-500).